The primary structure comprises 90 residues: Small ribosomal subunit protein bS20 (90 aa).

This sequence belongs to the bacterial ribosomal protein bS20 family.

Functionally, binds directly to 16S ribosomal RNA. The protein is Small ribosomal subunit protein bS20 of Rickettsia canadensis (strain McKiel).